A 141-amino-acid polypeptide reads, in one-letter code: Arsenate reductase (141 aa).

The Nucleophile; cysteine thioarsenate intermediate role is filled by Cys-12.

Belongs to the ArsC family.

It carries out the reaction [glutaredoxin]-dithiol + arsenate + glutathione + H(+) = glutathionyl-S-S-[glutaredoxin] + arsenite + H2O. Functionally, involved in resistance to arsenate. Catalyzes the reduction of arsenate [As(V)] to arsenite [As(III)]. The polypeptide is Arsenate reductase (Escherichia coli).